The chain runs to 371 residues: 4-hydroxyphenylpyruvate dioxygenase-like protein (371 aa).

VOC domains lie at 7–135 (RLCH…LLER) and 160–328 (RVDH…VFTK). Histidine 163, histidine 258, and glutamate 339 together coordinate Fe cation.

The protein belongs to the 4HPPD family. The cofactor is Fe cation.

It localises to the mitochondrion. The catalysed reaction is 3-(4-hydroxyphenyl)pyruvate + O2 = (S)-4-hydroxymandelate + CO2. In terms of biological role, iron-dependent dioxygenase that catalyzes the conversion of 4-hydroxyphenylpyruvate (4-HPPA) to 4-hydroxymandelate (4-HMA) in the mitochondria, one of the steps in the biosynthesis of coenzyme Q10 from tyrosine. The protein is 4-hydroxyphenylpyruvate dioxygenase-like protein of Homo sapiens (Human).